The chain runs to 707 residues: Leucine-rich repeat neuronal protein 3 (707 aa).

Positions 1 to 22 are cleaved as a signal peptide; the sequence is MKDAPLQIHVLLGLAITALVQA. Residues 23–69 enclose the LRRNT domain; the sequence is GDKKVDCPQLCTCEIRPWFTPRSIYMEASTVDCNDLGLLNFPARLPA. Residues 23-626 are Extracellular-facing; that stretch reads GDKKVDCPQL…DGKENGKSHT (604 aa). LRR repeat units follow at residues 70 to 91, 93 to 114, 117 to 138, 141 to 162, 165 to 186, 189 to 210, 213 to 234, 237 to 258, 261 to 282, 285 to 304, 310 to 332, and 335 to 358; these read DTQI…TDFP, NLTG…NVQK, QLLS…CLYG, NLQE…AFVG, NLLR…WFEA, NLEI…NFQP, KLRS…ALVG, NLES…ALQK, NLKF…DFSN, HLKE…DSLA, DLRK…AFFR, and KLES…ESLP. Residues asparagine 93 and asparagine 103 are each glycosylated (N-linked (GlcNAc...) asparagine). N-linked (GlcNAc...) asparagine glycosylation occurs at asparagine 223. One can recognise an LRRCT domain in the interval 368–421; the sequence is NPIRCDCVIRWINMNKTNIRFMEPDSLFCVDPPEFQGQNVRQVHFRDMMEICLP. An N-linked (GlcNAc...) asparagine glycan is attached at asparagine 382. The Ig-like C2-type domain maps to 421-514; that stretch reads PLIAPESFPS…DLKSIMIKVG (94 aa). Cysteine 444 and cysteine 496 are oxidised to a cystine. 3 N-linked (GlcNAc...) asparagine glycosylation sites follow: asparagine 522, asparagine 579, and asparagine 608. A Fibronectin type-III domain is found at 523–614; the sequence is GSLNIKIRDI…QCVNVTTKSL (92 aa). A helical transmembrane segment spans residues 627 to 647; sequence VFVACVGGLLGIIGVMCLFGC. The Cytoplasmic segment spans residues 648 to 707; the sequence is VSQEGNCENEHSYTVNHCHKPTLAFSELYPPLINLWESSKEKPASLEVKATAIGVPTSMS.

The protein localises to the membrane. The sequence is that of Leucine-rich repeat neuronal protein 3 (Lrrn3) from Rattus norvegicus (Rat).